The sequence spans 361 residues: Protein SGT1 homolog (361 aa).

3 TPR repeats span residues 3 to 36 (ASDL…GPAT), 37 to 70 (ADLY…DPTM), and 71 to 104 (HKAY…APGD). A Phosphothreonine modification is found at T150. The 90-residue stretch at 159-248 (KPKYRHDYYN…AEQVTWTTLD (90 aa)) folds into the CS domain. The tract at residues 255–295 (AIPQKISTPAETAPRPSYPSSKSKKDWDKLEAEVKKEEKEE) is disordered. A Phosphothreonine modification is found at T262. The 91-residue stretch at 271-361 (SYPSSKSKKD…DGMELKKWEI (91 aa)) folds into the SGS domain. Over residues 277-295 (SKKDWDKLEAEVKKEEKEE) the composition is skewed to basic and acidic residues.

This sequence belongs to the SGT1 family. Post-translationally, constitutively phosphorylated at Thr-262 and phosphorylated at Thr-150 upon infection with the fungal pathogen Ustilago maydis.

It localises to the cytoplasm. It is found in the nucleus. May act as positive regulator of basal defense. May be involved in basal disease resistance to the fungal pathogen Ustilago maydis. The polypeptide is Protein SGT1 homolog (Zea mays (Maize)).